We begin with the raw amino-acid sequence, 457 residues long: Siroheme synthase (457 aa).

Positions 1-204 (MDHLPIFCQL…NDQKAITETT (204 aa)) are precorrin-2 dehydrogenase /sirohydrochlorin ferrochelatase. NAD(+) is bound by residues 22-23 (DV) and 43-44 (LA). Serine 128 bears the Phosphoserine mark. The tract at residues 216 to 457 (GEVVLVGAGP…RDKLNWFSNH (242 aa)) is uroporphyrinogen-III C-methyltransferase. Proline 225 lines the S-adenosyl-L-methionine pocket. The active-site Proton acceptor is aspartate 248. The Proton donor role is filled by lysine 270. S-adenosyl-L-methionine-binding positions include 301 to 303 (GGD), isoleucine 306, 331 to 332 (TA), methionine 382, and glycine 411.

This sequence in the N-terminal section; belongs to the precorrin-2 dehydrogenase / sirohydrochlorin ferrochelatase family. The protein in the C-terminal section; belongs to the precorrin methyltransferase family.

The enzyme catalyses uroporphyrinogen III + 2 S-adenosyl-L-methionine = precorrin-2 + 2 S-adenosyl-L-homocysteine + H(+). The catalysed reaction is precorrin-2 + NAD(+) = sirohydrochlorin + NADH + 2 H(+). It carries out the reaction siroheme + 2 H(+) = sirohydrochlorin + Fe(2+). Its pathway is cofactor biosynthesis; adenosylcobalamin biosynthesis; precorrin-2 from uroporphyrinogen III: step 1/1. It participates in cofactor biosynthesis; adenosylcobalamin biosynthesis; sirohydrochlorin from precorrin-2: step 1/1. It functions in the pathway porphyrin-containing compound metabolism; siroheme biosynthesis; precorrin-2 from uroporphyrinogen III: step 1/1. The protein operates within porphyrin-containing compound metabolism; siroheme biosynthesis; siroheme from sirohydrochlorin: step 1/1. Its pathway is porphyrin-containing compound metabolism; siroheme biosynthesis; sirohydrochlorin from precorrin-2: step 1/1. In terms of biological role, multifunctional enzyme that catalyzes the SAM-dependent methylations of uroporphyrinogen III at position C-2 and C-7 to form precorrin-2 via precorrin-1. Then it catalyzes the NAD-dependent ring dehydrogenation of precorrin-2 to yield sirohydrochlorin. Finally, it catalyzes the ferrochelation of sirohydrochlorin to yield siroheme. This Escherichia coli O81 (strain ED1a) protein is Siroheme synthase.